We begin with the raw amino-acid sequence, 252 residues long: Small ribosomal subunit protein uS2A (252 aa).

Serine 2 bears the N-acetylserine mark. The interval 209–252 (EVEQQVAEEATTEEAGEEEAKEEVTEEQAEATEWAEENADNVEW) is disordered. Acidic residues predominate over residues 218–252 (ATTEEAGEEEAKEEVTEEQAEATEWAEENADNVEW).

The protein belongs to the universal ribosomal protein uS2 family. Component of the small ribosomal subunit. Mature ribosomes consist of a small (40S) and a large (60S) subunit. The 40S subunit contains about 33 different proteins and 1 molecule of RNA (18S). The 60S subunit contains about 49 different proteins and 3 molecules of RNA (25S, 5.8S and 5S). Interacts with RPS21.

The protein resides in the cytoplasm. Its function is as follows. Required for the assembly and/or stability of the 40S ribosomal subunit. Required for the processing of the 20S rRNA-precursor to mature 18S rRNA in a late step of the maturation of 40S ribosomal subunits. In Saccharomyces cerevisiae (strain RM11-1a) (Baker's yeast), this protein is Small ribosomal subunit protein uS2A.